Consider the following 233-residue polypeptide: Phosphoglycolate phosphatase 2 (233 aa).

The active-site Nucleophile is aspartate 13. Mg(2+) is bound by residues aspartate 13 and aspartate 15. Lysine 152 is a binding site for substrate. Residues aspartate 174 and aspartate 178 each contribute to the Mg(2+) site.

The protein belongs to the archaeal SPP-like hydrolase family. The cofactor is Mg(2+).

It catalyses the reaction 2-phosphoglycolate + H2O = glycolate + phosphate. Its function is as follows. Catalyzes the dephosphorylation of 2-phosphoglycolate. This chain is Phosphoglycolate phosphatase 2, found in Saccharolobus solfataricus (strain ATCC 35092 / DSM 1617 / JCM 11322 / P2) (Sulfolobus solfataricus).